Consider the following 151-residue polypeptide: Guanylate kinase homolog (151 aa).

In terms of domain architecture, Guanylate kinase-like spans 1–141 (MEREGVDYHY…AYSKLIQILQ (141 aa)).

This sequence belongs to the guanylate kinase family.

The protein is Guanylate kinase homolog of Vaccinia virus (strain Copenhagen) (VACV).